We begin with the raw amino-acid sequence, 1517 residues long: DNA-directed RNA polymerase subunit beta' (1517 aa).

C71, C73, C86, and C89 together coordinate Zn(2+). Residues D482, D484, and D486 each contribute to the Mg(2+) site. Zn(2+) contacts are provided by C812, C886, C893, and C896.

It belongs to the RNA polymerase beta' chain family. As to quaternary structure, the RNAP catalytic core consists of 2 alpha, 1 beta, 1 beta' and 1 omega subunit. When a sigma factor is associated with the core the holoenzyme is formed, which can initiate transcription. It depends on Mg(2+) as a cofactor. Requires Zn(2+) as cofactor.

The catalysed reaction is RNA(n) + a ribonucleoside 5'-triphosphate = RNA(n+1) + diphosphate. Its function is as follows. DNA-dependent RNA polymerase catalyzes the transcription of DNA into RNA using the four ribonucleoside triphosphates as substrates. In Campylobacter jejuni subsp. jejuni serotype O:6 (strain 81116 / NCTC 11828), this protein is DNA-directed RNA polymerase subunit beta'.